A 594-amino-acid chain; its full sequence is Solute carrier family 22 member 14 (594 aa).

At 1 to 70 (MAGEENFKEE…EFGTFQQRLV (70 aa)) the chain is on the cytoplasmic side. A helical membrane pass occupies residues 71 to 91 (ALTFIPSIMSAFFMFADHFVF). The Extracellular segment spans residues 92 to 184 (TAQKPYCNTS…LVCGMETKKD (93 aa)). 4 N-linked (GlcNAc...) asparagine glycosylation sites follow: Asn-99, Asn-117, Asn-125, and Asn-150. Residues 185–205 (TAQIMFMAGLPIGSLIFRLIT) form a helical membrane-spanning segment. Residues 206–210 (DKMGR) lie on the Cytoplasmic side of the membrane. Residues 211–231 (YPAILLSLLGLIIFGFGTAFM) traverse the membrane as a helical segment. The Extracellular segment spans residues 232-235 (NSFH). A helical membrane pass occupies residues 236 to 256 (LYLFFRFGISQSVVGYAISSI). Residues 257–270 (SLATEWLVGEHRAH) are Cytoplasmic-facing. Residues 271 to 291 (AIILGHCFFAVGAVLLTGIAY) form a helical membrane-spanning segment. At 292–297 (SLPHWQ) the chain is on the extracellular side. The chain crosses the membrane as a helical span at residues 298-318 (LLFLVGGILVIPFISYIWILP). Topologically, residues 319–379 (ESPRWLMMKG…DFCKNRQLCK (61 aa)) are cytoplasmic. The helical transmembrane segment at 380–400 (VTLVMSCVWFTVSYTYFTLSL) threads the bilayer. The Extracellular segment spans residues 401–408 (RMRELGVS). A helical transmembrane segment spans residues 409–431 (VHFRHVVPSIMEVPARLCCIFLL). Residues 432–437 (QQIGRK) are Cytoplasmic-facing. The helical transmembrane segment at 438-458 (WSLAVTLLQAIIWCLLLLFLP) threads the bilayer. The Extracellular portion of the chain corresponds to 459-488 (EGEDGLRLKWPRCPATELKSMTILVLMLRE). Residues 489 to 509 (FSLAATVTVFFLYTAELLPTV) traverse the membrane as a helical segment. Over 510-512 (LRA) the chain is Cytoplasmic. Residues 513–533 (TGLGLVSLASVAGAILSLTII) traverse the membrane as a helical segment. Residues 534–538 (SQTPS) lie on the Extracellular side of the membrane. A helical membrane pass occupies residues 539-559 (LLPIFLCCVLAIVAFSLSSLL). Over 560–594 (PETRDQPLSESLNHSSQIRNKVKDMKTKETSSDDV) the chain is Cytoplasmic. The disordered stretch occupies residues 566 to 594 (PLSESLNHSSQIRNKVKDMKTKETSSDDV). A compositionally biased stretch (polar residues) spans 567-578 (LSESLNHSSQIR). The span at 580–594 (KVKDMKTKETSSDDV) shows a compositional bias: basic and acidic residues.

This sequence belongs to the major facilitator (TC 2.A.1) superfamily. Organic cation transporter (TC 2.A.1.19) family. Ubiquitous.

The protein localises to the mitochondrion inner membrane. It localises to the cell projection. It is found in the cilium. The protein resides in the flagellum membrane. It carries out the reaction riboflavin(in) = riboflavin(out). In terms of biological role, riboflavin transporter localized at the inner mitochondrial membrane of the spermatozoa midpiece, which is required for male fertility. SLC22A14-mediated riboflavin transport is essential for spermatozoa energy generation and motility: riboflavin is the precursor of FMN and FAD, which are coenzymes of many enzymes in the TCA cycle (the citric acid cycle) in mitochondria. Required for sperm motility and normal sperm flagellar structure. The sequence is that of Solute carrier family 22 member 14 from Homo sapiens (Human).